Here is a 224-residue protein sequence, read N- to C-terminus: Ribonuclease T (224 aa).

The region spanning 32 to 206 (VVVDVETGGF…YDTEKTAELF (175 aa)) is the Exonuclease domain. Mg(2+) contacts are provided by D35, E37, H193, and D198. The Proton donor/acceptor role is filled by H193.

This sequence belongs to the RNase T family. Homodimer. The cofactor is Mg(2+).

In terms of biological role, trims short 3' overhangs of a variety of RNA species, leaving a one or two nucleotide 3' overhang. Responsible for the end-turnover of tRNA: specifically removes the terminal AMP residue from uncharged tRNA (tRNA-C-C-A). Also appears to be involved in tRNA biosynthesis. The protein is Ribonuclease T of Pseudomonas aeruginosa (strain UCBPP-PA14).